A 145-amino-acid polypeptide reads, in one-letter code: MAFMRSHSNASSGMGVAPDIRDTFLELQMKKAFRYVIFKIEEKQKQVVVEKTGATTESYDDFLASLPENDCRYALYDFDFVTGENVQKSKIFFIAWSPSTSRIRAKMLYSTSKDRIKQELDGFHYEIQATDPTEVDLEVLRERAH.

Residues Gly13–His145 form the ADF-H domain.

Belongs to the actin-binding proteins ADF family.

Actin-depolymerizing protein. Severs actin filaments (F-actin) and binds to actin monomers. This chain is Actin-depolymerizing factor 2 (ADF2), found in Oryza sativa subsp. japonica (Rice).